A 72-amino-acid polypeptide reads, in one-letter code: uncharacterized protein (72 aa).

This is an uncharacterized protein from Homo sapiens (Human).